A 250-amino-acid chain; its full sequence is Phosphoribosylaminoimidazole-succinocarboxamide synthase (250 aa).

This sequence belongs to the SAICAR synthetase family.

The catalysed reaction is 5-amino-1-(5-phospho-D-ribosyl)imidazole-4-carboxylate + L-aspartate + ATP = (2S)-2-[5-amino-1-(5-phospho-beta-D-ribosyl)imidazole-4-carboxamido]succinate + ADP + phosphate + 2 H(+). Its pathway is purine metabolism; IMP biosynthesis via de novo pathway; 5-amino-1-(5-phospho-D-ribosyl)imidazole-4-carboxamide from 5-amino-1-(5-phospho-D-ribosyl)imidazole-4-carboxylate: step 1/2. This is Phosphoribosylaminoimidazole-succinocarboxamide synthase from Parasynechococcus marenigrum (strain WH8102).